Here is a 452-residue protein sequence, read N- to C-terminus: Bifunctional protein GlmU (452 aa).

Positions 1-218 are pyrophosphorylase; sequence MKVLILAAGL…IVEVSGVNDR (218 aa). UDP-N-acetyl-alpha-D-glucosamine contacts are provided by residues 6-9, lysine 20, glutamine 68, 73-74, 95-97, glycine 134, glutamate 147, asparagine 162, and asparagine 216; these read LAAG, GT, and YGD. Aspartate 97 is a binding site for Mg(2+). Asparagine 216 contacts Mg(2+). A linker region spans residues 219 to 239; the sequence is IQLAQLETIAKQRILEKLMLS. The N-acetyltransferase stretch occupies residues 240–452; the sequence is GVTIVDPNST…EELKNADHKE (213 aa). Arginine 321 and lysine 339 together coordinate UDP-N-acetyl-alpha-D-glucosamine. The active-site Proton acceptor is the histidine 351. Positions 354 and 365 each coordinate UDP-N-acetyl-alpha-D-glucosamine. Acetyl-CoA-binding positions include alanine 368, 374 to 375, serine 393, alanine 411, and arginine 428; that span reads NY.

The protein in the N-terminal section; belongs to the N-acetylglucosamine-1-phosphate uridyltransferase family. This sequence in the C-terminal section; belongs to the transferase hexapeptide repeat family. In terms of assembly, homotrimer. It depends on Mg(2+) as a cofactor.

It localises to the cytoplasm. It catalyses the reaction alpha-D-glucosamine 1-phosphate + acetyl-CoA = N-acetyl-alpha-D-glucosamine 1-phosphate + CoA + H(+). The catalysed reaction is N-acetyl-alpha-D-glucosamine 1-phosphate + UTP + H(+) = UDP-N-acetyl-alpha-D-glucosamine + diphosphate. It functions in the pathway nucleotide-sugar biosynthesis; UDP-N-acetyl-alpha-D-glucosamine biosynthesis; N-acetyl-alpha-D-glucosamine 1-phosphate from alpha-D-glucosamine 6-phosphate (route II): step 2/2. The protein operates within nucleotide-sugar biosynthesis; UDP-N-acetyl-alpha-D-glucosamine biosynthesis; UDP-N-acetyl-alpha-D-glucosamine from N-acetyl-alpha-D-glucosamine 1-phosphate: step 1/1. It participates in bacterial outer membrane biogenesis; LPS lipid A biosynthesis. Catalyzes the last two sequential reactions in the de novo biosynthetic pathway for UDP-N-acetylglucosamine (UDP-GlcNAc). The C-terminal domain catalyzes the transfer of acetyl group from acetyl coenzyme A to glucosamine-1-phosphate (GlcN-1-P) to produce N-acetylglucosamine-1-phosphate (GlcNAc-1-P), which is converted into UDP-GlcNAc by the transfer of uridine 5-monophosphate (from uridine 5-triphosphate), a reaction catalyzed by the N-terminal domain. The sequence is that of Bifunctional protein GlmU from Fervidobacterium nodosum (strain ATCC 35602 / DSM 5306 / Rt17-B1).